Here is a 91-residue protein sequence, read N- to C-terminus: Small ribosomal subunit protein bS20 (91 aa).

Residues 1 to 25 form a disordered region; it reads MANSPSAKKRAKQAEKRRSHNASLR. Basic residues predominate over residues 7-20; that stretch reads AKKRAKQAEKRRSH.

This sequence belongs to the bacterial ribosomal protein bS20 family.

Its function is as follows. Binds directly to 16S ribosomal RNA. The polypeptide is Small ribosomal subunit protein bS20 (Azotobacter vinelandii (strain DJ / ATCC BAA-1303)).